The following is a 196-amino-acid chain: tRNA(Phe) 7-((3-amino-3-carboxypropyl)-4-demethylwyosine(37)-N(4))-methyltransferase (196 aa).

The protein belongs to the TYW3 family.

The enzyme catalyses 4-demethyl-7-[(3S)-3-amino-3-carboxypropyl]wyosine(37) in tRNA(Phe) + S-adenosyl-L-methionine = 7-[(3S)-3-amino-3-carboxypropyl]wyosine(37) in tRNA(Phe) + S-adenosyl-L-homocysteine + H(+). Functionally, S-adenosyl-L-methionine-dependent methyltransferase that acts as a component of the wyosine derivatives biosynthesis pathway. Probably methylates N-4 position of wybutosine-86 to produce wybutosine-72. This is tRNA(Phe) 7-((3-amino-3-carboxypropyl)-4-demethylwyosine(37)-N(4))-methyltransferase from Archaeoglobus fulgidus (strain ATCC 49558 / DSM 4304 / JCM 9628 / NBRC 100126 / VC-16).